Consider the following 597-residue polypeptide: Cytosolic Fe-S cluster assembly factor nar1 (597 aa).

6 residues coordinate [4Fe-4S] cluster: Cys20, Cys61, Cys64, Cys67, Cys209, and Cys264. Residues 419–447 form a disordered region; the sequence is PARASRLPGARQSATSAGGSRRQLASRNA. Residues 430-447 show a composition bias toward polar residues; it reads QSATSAGGSRRQLASRNA. 2 residues coordinate [4Fe-4S] cluster: Cys464 and Cys468. The tract at residues 482-504 is disordered; that stretch reads EAASNMSVESQTEPPEAALKPTP. The span at 485–494 shows a compositional bias: polar residues; the sequence is SNMSVESQTE.

The protein belongs to the NARF family.

Component of the cytosolic Fe/S protein assembly machinery. Required for maturation of extramitochondrial Fe/S proteins. May play a role in the transfer of pre-assembled Fe/S clusters to target apoproteins. In Aspergillus clavatus (strain ATCC 1007 / CBS 513.65 / DSM 816 / NCTC 3887 / NRRL 1 / QM 1276 / 107), this protein is Cytosolic Fe-S cluster assembly factor nar1 (nar1).